Here is a 573-residue protein sequence, read N- to C-terminus: uncharacterized protein (573 aa).

This is an uncharacterized protein from Treponema pallidum (strain Nichols).